Reading from the N-terminus, the 203-residue chain is Small ribosomal subunit protein uS5 (203 aa).

Over residues 1–25 the composition is skewed to basic and acidic residues; sequence MPGRTRRDGGSESGGKDRRDRRDGG. The interval 1-36 is disordered; sequence MPGRTRRDGGSESGGKDRRDRRDGGRGGAAQEKTPQ. Positions 36–99 constitute an S5 DRBM domain; the sequence is QFERVVTINR…EEAKKNFFRV (64 aa).

It belongs to the universal ribosomal protein uS5 family. As to quaternary structure, part of the 30S ribosomal subunit. Contacts proteins S4 and S8.

Its function is as follows. With S4 and S12 plays an important role in translational accuracy. Functionally, located at the back of the 30S subunit body where it stabilizes the conformation of the head with respect to the body. The sequence is that of Small ribosomal subunit protein uS5 from Saccharopolyspora erythraea (strain ATCC 11635 / DSM 40517 / JCM 4748 / NBRC 13426 / NCIMB 8594 / NRRL 2338).